A 160-amino-acid polypeptide reads, in one-letter code: Protein max (160 aa).

Residues 1–13 (MSDNDDIEVESDE) show a composition bias toward acidic residues. Positions 1 to 40 (MSDNDDIEVESDEEQPRFQSAADKRAHHNALERKRRDHIK) are disordered. Ser2 is subject to N-acetylserine. Phosphoserine is present on residues Ser2 and Ser11. Residues 23–74 (DKRAHHNALERKRRDHIKDSFHSLRDSVPSLQGEKASRAQILDKATEYIQYM) form the bHLH domain. Basic and acidic residues predominate over residues 29-40 (NALERKRRDHIK). An N6-acetyllysine modification is found at Lys66. Residues 81-102 (HQQDIDDLKRQNALLEQQVRAL) form a leucine-zipper region. The segment at 103–160 (EKARSSAQLQTNYPSSDNSLYTNAKGSTISAFDGGSDSSSESEPEEPQSRKKLRMEAS) is disordered. Residue Ser107 is modified to Phosphoserine. A compositionally biased stretch (polar residues) spans 107–132 (SSAQLQTNYPSSDNSLYTNAKGSTIS). The Nuclear localization signal signature appears at 152 to 156 (RKKLR). 2 positions are modified to N6-acetyllysine: Lys153 and Lys154.

The protein belongs to the MAX family. In terms of assembly, efficient DNA binding requires dimerization with another bHLH protein. Binds DNA as a heterodimer with MYC or MAD. Part of the E2F6.com-1 complex in G0 phase composed of E2F6, MGA, MAX, TFDP1, CBX3, BAT8, EUHMTASE1, RING1, RNF2, MBLR, L3MBTL2 and YAF2. Component of some MLL1/MLL complex, at least composed of the core components KMT2A/MLL1, ASH2L, HCFC1/HCF1, WDR5 and RBBP5, as well as the facultative components BACC1, CHD8, E2F6, HSP70, INO80C, KANSL1, LAS1L, MAX, MCRS1, MGA, MYST1/MOF, PELP1, PHF20, PRP31, RING2, RUVB1/TIP49A, RUVB2/TIP49B, SENP3, TAF1, TAF4, TAF6, TAF7, TAF9 and TEX10. Interacts with SPAG9. The heterodimer MYC:MAX interacts with ABI1; the interaction may enhance MYC:MAX transcriptional activity. In terms of processing, reversible lysine acetylation might regulate the nuclear-cytoplasmic shuttling of specific Max complexes. High levels found in the brain, heart and lung while lower levels are seen in the liver, kidney and skeletal muscle.

The protein resides in the nucleus. It is found in the cell projection. It localises to the dendrite. Its function is as follows. Transcription regulator. Forms a sequence-specific DNA-binding protein complex with MYC or MAD which recognizes the core sequence 5'-CAC[GA]TG-3'. The MYC:MAX complex is a transcriptional activator, whereas the MAD:MAX complex is a repressor. May repress transcription via the recruitment of a chromatin remodeling complex containing H3 'Lys-9' histone methyltransferase activity. Represses MYC transcriptional activity from E-box elements. The polypeptide is Protein max (Homo sapiens (Human)).